The sequence spans 123 residues: Cell division protein SepF (123 aa).

The protein belongs to the SepF family. Homodimer. Interacts with FtsZ.

Its subcellular location is the cytoplasm. In terms of biological role, cell division protein that is part of the divisome complex and is recruited early to the Z-ring. Probably stimulates Z-ring formation, perhaps through the cross-linking of FtsZ protofilaments. Its function overlaps with FtsA. The polypeptide is Cell division protein SepF (Tropheryma whipplei (strain TW08/27) (Whipple's bacillus)).